The chain runs to 351 residues: Serine protease inhibitor dipetalogastin (351 aa).

The propeptide occupies 1-131 (LIKELVNMVI…AETTNAMEVL (131 aa)). 6 Kazal-like domains span residues 19–69 (KELK…PCDE), 72–122 (HDFE…ECHA), 131–181 (LFQG…PCDE), 184–234 (HDFE…ECHP), 240–289 (QLIL…ECKV), and 297–347 (GEVR…RCLP). Intrachain disulfides connect Cys25-Cys50, Cys27-Cys46, Cys35-Cys67, Cys78-Cys103, Cys80-Cys99, Cys88-Cys120, Cys137-Cys162, Cys139-Cys158, Cys147-Cys179, Cys190-Cys215, Cys192-Cys211, Cys200-Cys232, Cys246-Cys271, Cys248-Cys267, Cys256-Cys287, Cys303-Cys328, Cys305-Cys324, and Cys313-Cys345.

The protein resides in the secreted. In terms of biological role, thrombin inhibitor. Prevents blood clotting to allow insect to feed on blood. Also functions as an inhibitor of trypsin and plasmin. In Dipetalogaster maximus (Blood-sucking bug), this protein is Serine protease inhibitor dipetalogastin.